The chain runs to 637 residues: DNA damage-binding protein CMR1 (637 aa).

2 disordered regions span residues 1 to 91 (MIES…EEEA) and 144 to 168 (LVDTKDENKRRSANKPDPQFSTERR). Composition is skewed to basic and acidic residues over residues 8–23 (EQERLKNIRENERLMK) and 74–91 (AGHEADSETLKRKYEEEA). WD repeat units follow at residues 185–226 (VTPK…FASN), 255–295 (HARS…SEEI), 297–321 (AGEEDVLLSIFDVLSPSTHPSVYMD), 361–401 (VCEK…SVVK), and 431–470 (KARQACTSVDFSPRGDQLVGVSYDDVVKVWSMEPGSLFSE). Disordered stretches follow at residues 482 to 508 (SNKPKGAVKKQVPDSASDTGPGLLSWL) and 525 to 549 (KQEQDAPSPSLSKRPDDVLANPTRI). WD repeat units lie at residues 556–598 (GKWL…LRSL) and 602–637 (NLVTAVPAVTCMHPVLPARLVTGNASGRCTFWSPDP).

Belongs to the WD repeat DDB2/WDR76 family.

Its function is as follows. DNA-binding protein that binds to both single- and double-stranded DNA. Binds preferentially to UV-damaged DNA. May be involved in DNA-metabolic processes. The sequence is that of DNA damage-binding protein CMR1 from Mycosarcoma maydis (Corn smut fungus).